Reading from the N-terminus, the 251-residue chain is Aspartate/glutamate leucyltransferase (251 aa).

Belongs to the R-transferase family. Bpt subfamily.

It is found in the cytoplasm. It catalyses the reaction N-terminal L-glutamyl-[protein] + L-leucyl-tRNA(Leu) = N-terminal L-leucyl-L-glutamyl-[protein] + tRNA(Leu) + H(+). The enzyme catalyses N-terminal L-aspartyl-[protein] + L-leucyl-tRNA(Leu) = N-terminal L-leucyl-L-aspartyl-[protein] + tRNA(Leu) + H(+). Functions in the N-end rule pathway of protein degradation where it conjugates Leu from its aminoacyl-tRNA to the N-termini of proteins containing an N-terminal aspartate or glutamate. This chain is Aspartate/glutamate leucyltransferase, found in Stenotrophomonas maltophilia (strain R551-3).